The chain runs to 1493 residues: DNA excision repair protein ERCC-6 (1493 aa).

Residues 1 to 39 form a disordered region; sequence MPNEGIPHSSQTQEQDCLQSQPVSNNEEMAIKQESGGDG. An N-terminal domain; essential for its chromatin remodeling activity region spans residues 1-510; the sequence is MPNEGIPHSS…GFLFKKLFKY (510 aa). Over residues 8–27 the composition is skewed to polar residues; that stretch reads HSSQTQEQDCLQSQPVSNNE. S10 is modified (phosphoserine; by ATM). Residue S158 is modified to Phosphoserine; by CDK2. At K170 the chain carries N6-methylated lysine; by EHMT2. K205 is covalently cross-linked (Glycyl lysine isopeptide (Lys-Gly) (interchain with G-Cter in SUMO3)). A Glycyl lysine isopeptide (Lys-Gly) (interchain with G-Cter in SUMO2) cross-link involves residue K255. 2 disordered regions span residues 287-323 and 344-453; these read KQGC…VLSK and GKVG…GRYR. K297 is subject to N6-methylated lysine; by EHMT2. Over residues 353–363 the composition is skewed to basic and acidic residues; it reads RPWESDMRPEA. The span at 364-392 shows a compositional bias: acidic residues; it reads EGDSEGEESEYFPTEEEEEEEDDEVEGAE. A phosphoserine mark is found at S429 and S430. Position 448 is an N6-methylated lysine; by EHMT2 (K448). Phosphoserine occurs at positions 486 and 489. Residues 519–695 form the Helicase ATP-binding domain; that stretch reads WELHCQQAGG…WSLFDFIFPG (177 aa). 532–539 lines the ATP pocket; that stretch reads DEMGLGKT. Residues 646–649 carry the DEAH box motif; that stretch reads DEGH. The Helicase C-terminal domain occupies 843–1002; that stretch reads VVESLLKIWH…RRFFKSNDLY (160 aa). 3 disordered regions span residues 1042–1147, 1181–1247, and 1318–1384; these read PAFG…DESI, HKSK…EQSN, and RGIS…SGPL. K1054 carries the post-translational modification N6-methylated lysine; by EHMT2. The span at 1123 to 1141 shows a compositional bias: polar residues; that stretch reads ISGNGECSNSSGTGKTSMP. S1142 is subject to Phosphoserine. A compositionally biased stretch (basic residues) spans 1200–1210; sequence LRPKQKPKNSK. 2 stretches are compositionally biased toward basic and acidic residues: residues 1211–1221 and 1232–1247; these read HCRDAKFEGTR and QKQD…EQSN. Positions 1327-1336 are enriched in basic residues; the sequence is KKSRFGKKRN. Residues 1337 to 1351 are compositionally biased toward polar residues; the sequence is SNFSVQHPSSTSPTE. Position 1348 is a phosphoserine (S1348). The span at 1352-1376 shows a compositional bias: basic and acidic residues; that stretch reads KCQDGIMKKEGKDNVPEHFSGRAED. The CSA-interacting motif (CIM) motif lies at 1386–1398; sequence SSSLLAKMRARNH. The ubiquitin-binding domain (UBD) stretch occupies residues 1400–1428; it reads ILPERLESESGHLQEASALLPTTEHDDLL. Residues 1429–1493 are winged-helix domain (WHD); the sequence is VEMRNFIAFQ…GIWKLKPEYC (65 aa). Residues 1446–1493 form an essential for its interaction with RNA polymerase II, transcription-coupled nucleotide excision repair activity, association with chromatin after UV irradiation and for mediating the UV-induced translocation of ERRC8 to the nuclear matrix region; that stretch reads STREILQEFESKLSASQSCVFRELLRNLCTFHRTSGGEGIWKLKPEYC.

Belongs to the SNF2/RAD54 helicase family. Homodimer. Binds DNA. Interacts with ERCC8. Interacts with RNA polymerase II; interaction is enhanced by UV irradiation. Component of the B-WICH complex, at least composed of SMARCA5/SNF2H, BAZ1B/WSTF, SF3B1, DEK, MYO1C, ERCC6, MYBBP1A and DDX21. Interacts with KIAA1530/UVSSA. Interacts with ELOA and CUL5; the interaction is induced by DNA damaging agents or by inhibitors of RNA polymerase II elongation. Interacts (via WHD region) with RIF1. Interacts with SMARCC2/BAF170, SMARCB1/BAF47 and the neuron-specific chromatin remodeling complex (nBAF complex). Interacts with ERCC5/XPG (via C-terminus); the interaction stimulates ERCC6/CSB binding to the DNA repair bubble and ERCC6/CSB ATPase activity. May form a complex composed of RNA polymerase II, ERCC6/CSB and ERCC5/XPG which associates with the DNA repair bubble during transcription-coupled nucleotide excision repair. Interacts with CAND1, CSTF1, DDX3X, DDX5, DDX17, DDX23, DHX36, HDAC1, HNRNPU, MTA2, PRPF3, PSMD3, RBBP4, SFPQ, SMARCA1, SMARCA2, TOP1, USP7, XRCC5, COPS3, COPS4, COPS6, DDX1, DDX41, GATAD2A, GATAD2B, PRPF4, PSMC5, SF3B2, CTR9, NONO, PSMD12 and TOP2A. In terms of processing, phosphorylated in a cell cycle-dependent manner at Ser-158 by cyclin A-CDK2 and at Ser-10 by ATM in response to DNA damage. Phosphorylation at these two sites promotes the intramolecular interaction of the N-terminal domain with the helicase ATP-binding domain, thereby probably releasing the inhibitory effect of the N-terminal domain on its ATPase activity. Phosphorylation is essential for its chromatin remodeling activity. Post-translationally, ubiquitinated at the C-terminus. Ubiquitination by the CSA complex leads to ERCC6 proteasomal degradation in a UV-dependent manner. Stabilized following interaction with KIAA1530/UVSSA, which promotes recruitment of deubiquitinating enzyme USP7, leading to deubiquitination of ERCC6 thereby preventing UV-induced degradation of ERCC6 by the proteasome. Sumoylation at Lys-205 in an UV-radiation-dependent manner is essential for its transcription-coupled nucleotide excision repair activity.

It is found in the nucleus. The protein resides in the chromosome. It carries out the reaction ATP + H2O = ADP + phosphate + H(+). Functionally, essential factor involved in transcription-coupled nucleotide excision repair (TC-NER), a process during which RNA polymerase II-blocking lesions are rapidly removed from the transcribed strand of active genes. Plays a central role in the initiation of the TC-NER process: specifically recognizes and binds RNA polymerase II stalled at a lesion, and mediates recruitment of ERCC8/CSA, initiating DNA damage excision by TFIIH recruitment. Upon DNA-binding, it locally modifies DNA conformation by wrapping the DNA around itself, thereby modifying the interface between stalled RNA polymerase II and DNA. Acts as a chromatin remodeler at DSBs; DNA-dependent ATPase-dependent activity is essential for this function. Plays an important role in regulating the choice of the DNA double-strand breaks (DSBs) repair pathway and G2/M checkpoint activation; DNA-dependent ATPase activity is essential for this function. Regulates the DNA repair pathway choice by inhibiting non-homologous end joining (NHEJ), thereby promoting the homologous recombination (HR)-mediated repair of DSBs during the S/G2 phases of the cell cycle. Mediates the activation of the ATM- and CHEK2-dependent DNA damage responses thus preventing premature entry of cells into mitosis following the induction of DNA DSBs. Remodels chromatin by evicting histones from chromatin flanking DSBs, limiting RIF1 accumulation at DSBs thereby promoting BRCA1-mediated HR. Required for stable recruitment of ELOA and CUL5 to DNA damage sites. Also involved in UV-induced translocation of ERCC8 to the nuclear matrix. Essential for neuronal differentiation and neuritogenesis; regulates transcription and chromatin remodeling activities required during neurogenesis. This Homo sapiens (Human) protein is DNA excision repair protein ERCC-6.